The chain runs to 117 residues: MARVKRGVIARARHKKVLKAAKGYYGARSRVYRVAFQAVIKAGQYAYRDRRQRKRQFRQLWIARINAATRQNGLSYSKFINGLKKASVEIDRKILADIAVFDKVAFTALVEKAKSAL.

This sequence belongs to the bacterial ribosomal protein bL20 family.

Binds directly to 23S ribosomal RNA and is necessary for the in vitro assembly process of the 50S ribosomal subunit. It is not involved in the protein synthesizing functions of that subunit. The chain is Large ribosomal subunit protein bL20 from Histophilus somni (strain 129Pt) (Haemophilus somnus).